The sequence spans 816 residues: Phosphatidylinositol 4-kinase beta (816 aa).

3 disordered regions span residues 1–28 (MGDT…NGGS), 93–120 (PPTG…RRRR), and 249–318 (HRKR…SFSS). An N-acetylglycine modification is found at Gly2. The segment at 2 to 68 (GDTVVAPAPL…VKLSHGGVAS (67 aa)) is interaction with ACBD3. The PIK helical domain maps to 49–242 (QKACQEVLQK…GTKLRRLILS (194 aa)). The residue at position 258 (Ser258) is a Phosphoserine. Phosphothreonine is present on Thr263. A phosphoserine mark is found at Ser266, Ser275, Ser277, Ser284, Ser294, Ser428, and Ser511. The span at 278–294 (DATASISLSSSLKRTAS) shows a compositional bias: low complexity. Residues Thr517 and Thr519 each carry the phosphothreonine modification. The region spanning 535-801 (EPWQEKVRRI…MVDGSMRSIT (267 aa)) is the PI3K/PI4K catalytic domain. Residues 541–547 (VRRIREG) form a G-loop region. The segment at 668–676 (QVKDRHNGN) is catalytic loop. Residues 687–711 (HIDFGFILSSSPRNLGFETSAFKLT) form an activation loop region.

This sequence belongs to the PI3/PI4-kinase family. Type III PI4K subfamily. As to quaternary structure, interacts with ARF1 and ARF3 in the Golgi complex, but not with ARF4, ARF5 or ARF6. Interacts with NCS1/FREQ in a calcium-independent manner. Interacts with CALN1/CABP8 and CALN2/CABP7; in a calcium-dependent manner; this interaction competes with NCS1/FREQ binding. Interacts with ACBD3. Interacts with ARMH3, YWHAB, YWHAE, YWHAG, YWHAH, YWHAQ, YWHAZ and SFN. Interacts with GGA2 (via VHS domain); the interaction is important for PI4KB location at the Golgi apparatus membrane. Interacts with ATG9A. Mg(2+) serves as cofactor. It depends on Mn(2+) as a cofactor.

It is found in the endomembrane system. The protein localises to the mitochondrion outer membrane. The protein resides in the rough endoplasmic reticulum membrane. Its subcellular location is the golgi apparatus. It localises to the golgi apparatus membrane. It catalyses the reaction a 1,2-diacyl-sn-glycero-3-phospho-(1D-myo-inositol) + ATP = a 1,2-diacyl-sn-glycero-3-phospho-(1D-myo-inositol 4-phosphate) + ADP + H(+). Inhibited by wortmannin. Increased kinase activity upon interaction with NCS1/FREQ. In terms of biological role, phosphorylates phosphatidylinositol (PI) in the first committed step in the production of the second messenger inositol-1,4,5,-trisphosphate (PIP). May regulate Golgi disintegration/reorganization during mitosis, possibly via its phosphorylation. Involved in Golgi-to-plasma membrane trafficking. May play an important role in the inner ear development. The polypeptide is Phosphatidylinositol 4-kinase beta (PI4KB) (Rhinolophus ferrumequinum (Greater horseshoe bat)).